The primary structure comprises 70 residues: Kappa-conotoxin-like Sx11.2 (70 aa).

The signal sequence occupies residues 1–26; it reads MMFRVTSVGCLLLVIVFLNLVVPTSA. Intrachain disulfides connect C27/C41, C34/C46, C40/C50, and C45/C54. 4-carboxyglutamate is present on residues E30, E35, and E44. P53 is modified (4-hydroxyproline). At P57 the chain carries Proline amide. The propeptide occupies 61–70; it reads SKLQEFFRQR.

It belongs to the conotoxin I2 superfamily. As to expression, expressed by the venom duct.

It localises to the secreted. Its function is as follows. Modulator of potassium channels, specifically up-modulates the calcium and voltage-gated BK channels, has no effect on single channel conductance, but increases the open probability of BK channels. This is Kappa-conotoxin-like Sx11.2 from Conus striolatus (Cone snail).